The chain runs to 207 residues: Phosphoenolpyruvate guanylyltransferase (207 aa).

The phosphoenolpyruvate site is built by Thr-137, Gly-153, and Ser-156.

This sequence belongs to the CofC family.

It catalyses the reaction phosphoenolpyruvate + GTP + H(+) = enolpyruvoyl-2-diphospho-5'-guanosine + diphosphate. The protein operates within cofactor biosynthesis; coenzyme F420 biosynthesis. Functionally, guanylyltransferase that catalyzes the activation of phosphoenolpyruvate (PEP) as enolpyruvoyl-2-diphospho-5'-guanosine, via the condensation of PEP with GTP. It is involved in the biosynthesis of coenzyme F420, a hydride carrier cofactor. This is Phosphoenolpyruvate guanylyltransferase from Sphaerobacter thermophilus (strain ATCC 49802 / DSM 20745 / KCCM 41009 / NCIMB 13125 / S 6022).